The primary structure comprises 573 residues: NADP-dependent malic enzyme, chloroplastic (573 aa).

Tyr123 serves as the catalytic Proton donor. Arg176 is a binding site for NAD(+). Residue Lys194 is the Proton acceptor of the active site. The a divalent metal cation site is built by Glu265, Asp266, and Asp289. Asp289 lines the NAD(+) pocket. NADP(+) is bound at residue 318 to 334 (LFLGAGEAGTGIAELIA). An NAD(+)-binding site is contributed by Asn430.

Belongs to the malic enzymes family. As to quaternary structure, homotetramer. Mg(2+) is required as a cofactor. Requires Mn(2+) as cofactor.

It localises to the plastid. Its subcellular location is the chloroplast. The enzyme catalyses (S)-malate + NADP(+) = pyruvate + CO2 + NADPH. The catalysed reaction is oxaloacetate + H(+) = pyruvate + CO2. The protein operates within photosynthesis; C4 acid pathway. Functionally, the chloroplastic ME isoform decarboxylates malate shuttled from neighboring mesophyll cells. The CO(2) released is then refixed by ribulose-bisphosphate carboxylase. This pathway eliminates the photorespiratory loss of CO(2) that occurs in most plants. The polypeptide is NADP-dependent malic enzyme, chloroplastic (Solanum lycopersicum (Tomato)).